Consider the following 142-residue polypeptide: Putative pre-16S rRNA nuclease (142 aa).

This sequence belongs to the YqgF nuclease family.

The protein resides in the cytoplasm. In terms of biological role, could be a nuclease involved in processing of the 5'-end of pre-16S rRNA. This Staphylococcus saprophyticus subsp. saprophyticus (strain ATCC 15305 / DSM 20229 / NCIMB 8711 / NCTC 7292 / S-41) protein is Putative pre-16S rRNA nuclease.